Here is a 65-residue protein sequence, read N- to C-terminus: pH-response transcription factor pacC/RIM101 (65 aa).

A C2H2-type 1 zinc finger spans residues 16–40 (LTCQWNSCRTTTVKRDHITSHIRVH). A C2H2-type 2; degenerate zinc finger spans residues 46 to 65 (HKCEFCGKSFKRPQDLKKHV).

The protein belongs to the pacC/RIM101 family.

It localises to the nucleus. In terms of biological role, transcription factor that mediates regulation of both acid- and alkaline-expressed genes in response to ambient pH. At alkaline ambient pH, activates transcription of alkaline-expressed genes (including pac1 itself) and represses transcription of acid-expressed genes. This Colletotrichum gloeosporioides (Anthracnose fungus) protein is pH-response transcription factor pacC/RIM101 (pac1).